Here is a 520-residue protein sequence, read N- to C-terminus: Autophagy-related protein 22 (520 aa).

Asn11 is a glycosylation site (N-linked (GlcNAc...) asparagine). 4 helical membrane passes run 32–52 (IVGWYFYSFSSEPFVVSAIAT), 104–124 (FSVSVFFQTLVVITVSGVVDI), 133–153 (NVLLLFGIIGALSTILISRIY), and 158–178 (YMLAFLCILSNSCYGVVNVVG). Asn193 carries an N-linked (GlcNAc...) asparagine glycan. The next 2 helical transmembrane spans lie at 214–234 (GASIGYSSALVVQIISIFLIK) and 244–264 (VATLFVGIWWLIWQLPMSWLL). The N-linked (GlcNAc...) asparagine glycan is linked to Asn280. The next 6 membrane-spanning stretches (helical) occupy residues 316-336 (VVIFLVGWFIVSDSVTTINST), 350-370 (LSLIVLSILTMINAILGAFTI), 386-406 (LIYIILWASFIPFYGILGFVF), 415-435 (FEMFITAIWYGISLGGLSAVS), 454-474 (IFNVTDKGSSILGPLLIGLIT), and 483-503 (SFFLLFALLILAIPIFHLLDV).

This sequence belongs to the ATG22 family.

The protein resides in the vacuole membrane. Vacuolar effluxer which mediate the efflux of amino acids resulting from autophagic degradation. The release of autophagic amino acids allows the maintenance of protein synthesis and viability during nitrogen starvation. This chain is Autophagy-related protein 22 (ATG22), found in Vanderwaltozyma polyspora (strain ATCC 22028 / DSM 70294 / BCRC 21397 / CBS 2163 / NBRC 10782 / NRRL Y-8283 / UCD 57-17) (Kluyveromyces polysporus).